Reading from the N-terminus, the 228-residue chain is ATP-dependent dethiobiotin synthetase BioD (228 aa).

12-17 (EIGKTT) is an ATP binding site. A Mg(2+)-binding site is contributed by T16. Residue K37 is part of the active site. Position 41 (S41) interacts with substrate. ATP is bound by residues D54, 116–119 (EGAG), and 205–207 (PRL). D54 and E116 together coordinate Mg(2+).

It belongs to the dethiobiotin synthetase family. In terms of assembly, homodimer. The cofactor is Mg(2+).

The protein localises to the cytoplasm. It carries out the reaction (7R,8S)-7,8-diammoniononanoate + CO2 + ATP = (4R,5S)-dethiobiotin + ADP + phosphate + 3 H(+). The protein operates within cofactor biosynthesis; biotin biosynthesis; biotin from 7,8-diaminononanoate: step 1/2. Functionally, catalyzes a mechanistically unusual reaction, the ATP-dependent insertion of CO2 between the N7 and N8 nitrogen atoms of 7,8-diaminopelargonic acid (DAPA, also called 7,8-diammoniononanoate) to form a ureido ring. This is ATP-dependent dethiobiotin synthetase BioD from Pseudomonas aeruginosa (strain UCBPP-PA14).